The following is a 716-amino-acid chain: Calpain-1 catalytic subunit (716 aa).

The Calpain catalytic domain occupies 55-354 (LFRDEAFPPV…FTRLEICNLT (300 aa)). The Ca(2+) site is built by Gln109 and Asp114. Active-site residues include Cys115, His272, and Asn296. Asp318 and Glu323 together coordinate Ca(2+). Thr354 is subject to Phosphothreonine. Positions 355-528 (PDALKSQRFR…KSAGTQELDD (174 aa)) are domain III. The linker stretch occupies residues 529 to 544 (QVQANLPDEQVLSEEE). EF-hand domains lie at 543–578 (EEID…IISK), 587–620 (FSLE…NRIR), 617–652 (NRIR…AGFK), and 682–716 (VRLE…TMFA). A domain IV region spans residues 545–715 (IDENFKSLFR…LFKWLQLTMF (171 aa)). Ca(2+) contacts are provided by Asp600, Asp602, Asn604, Lys606, Glu611, Asp630, Asp632, Ser634, Ser636, and Glu641.

It belongs to the peptidase C2 family. In terms of assembly, forms a heterodimer with a small (regulatory) subunit CAPNS1. Requires Ca(2+) as cofactor. Undergoes calcium-induced successive autoproteolytic cleavages that generate a membrane-bound 78 kDa active form and an intracellular 75 kDa active form. Calpastatin reduces with high efficiency the transition from 78 kDa to 75 kDa calpain forms.

It is found in the cytoplasm. It localises to the cell membrane. The catalysed reaction is Broad endopeptidase specificity.. Activated by micromolar concentrations of calcium and inhibited by calpastatin. Its function is as follows. Calcium-regulated non-lysosomal thiol-protease which catalyzes limited proteolysis of substrates involved in cytoskeletal remodeling and signal transduction. Proteolytically cleaves CTBP1. Cleaves and activates caspase-7 (CASP7). This is Calpain-1 catalytic subunit from Bos taurus (Bovine).